We begin with the raw amino-acid sequence, 315 residues long: Pantothenate synthetase (315 aa).

45-52 (MGALHEGH) lines the ATP pocket. Histidine 52 serves as the catalytic Proton donor. Glutamine 77 lines the (R)-pantoate pocket. Glutamine 77 serves as a coordination point for beta-alanine. 163-166 (GEKD) contributes to the ATP binding site. Glutamine 169 contacts (R)-pantoate. ATP-binding positions include valine 192 and 200 to 203 (MSSR).

The protein belongs to the pantothenate synthetase family. As to quaternary structure, homodimer.

It is found in the cytoplasm. It carries out the reaction (R)-pantoate + beta-alanine + ATP = (R)-pantothenate + AMP + diphosphate + H(+). It functions in the pathway cofactor biosynthesis; (R)-pantothenate biosynthesis; (R)-pantothenate from (R)-pantoate and beta-alanine: step 1/1. Its function is as follows. Catalyzes the condensation of pantoate with beta-alanine in an ATP-dependent reaction via a pantoyl-adenylate intermediate. This Mycobacterium ulcerans (strain Agy99) protein is Pantothenate synthetase.